The chain runs to 256 residues: UPF0259 membrane protein YPO2199/y2042/YP_1997 (256 aa).

6 helical membrane passes run 20 to 40, 90 to 110, 118 to 138, 141 to 161, 192 to 212, and 221 to 241; these read IAAILLLALLTAFITVMLNQT, FSALVGNVLLVGGLLTLIAMV, ALQAIGLSLPILPRLLVLMFI, LVIQLGLTFFIVPGVAIAIAL, LIVPAMMLWIAVKLLLLFLIS, and IATIVLSTLSNLASALLLVYL.

This sequence belongs to the UPF0259 family.

It is found in the cell inner membrane. The chain is UPF0259 membrane protein YPO2199/y2042/YP_1997 from Yersinia pestis.